A 536-amino-acid chain; its full sequence is Solute carrier family 2, facilitated glucose transporter member 10 (536 aa).

Over 1-15 the chain is Cytoplasmic; sequence MGLRPAVLLLCASVS. The helical transmembrane segment at 16-36 threads the bilayer; it reads LLGGLTFGYELAVISGALLPL. Over 37–48 the chain is Extracellular; that stretch reads QLNFGLSCLEQE. A helical transmembrane segment spans residues 49–69; the sequence is LLVGSLLLGALLASLVGGFLI. The Cytoplasmic segment spans residues 70 to 82; the sequence is DCYGRRRAILGSN. The chain crosses the membrane as a helical span at residues 83 to 103; sequence AVLLAGSLILGLASSLPWLLL. Over 104–107 the chain is Extracellular; the sequence is GRLS. Residues 108–128 traverse the membrane as a helical segment; the sequence is VGFAISLSSMACCIYVSELVG. The Cytoplasmic portion of the chain corresponds to 129 to 132; sequence PRQR. A helical membrane pass occupies residues 133-153; sequence GVLVSLYEVGITVGILFSYGL. At 154–166 the chain is on the extracellular side; that stretch reads NYVLAGSPWGWRH. The chain crosses the membrane as a helical span at residues 167–187; sequence MFGWAAAPALLQSLSLFLLPA. Topologically, residues 188 to 232 are cytoplasmic; that stretch reads GAEGTAAPKDLIPLQGRETSKPGLVKPQYSFLDLFRAQDGMWSRT. Residues 233–253 form a helical membrane-spanning segment; it reads VVGLGLVLFQQLTGQPNVLYY. 242 to 243 is a D-glucose binding site; the sequence is QQ. Over 254–269 the chain is Extracellular; the sequence is ASTIFRSVGFHGGSSA. The helical transmembrane segment at 270 to 290 threads the bilayer; the sequence is VLASVGLGTVKVAATLVATGL. The Cytoplasmic portion of the chain corresponds to 291-298; sequence VDRAGRRV. Residues 299-319 traverse the membrane as a helical segment; it reads LLLFGCALMALSVSGIGLVSF. The Extracellular portion of the chain corresponds to 320-402; the sequence is AVSLDSGPSC…VPTSPILEHT (83 aa). A helical transmembrane segment spans residues 403–423; it reads LLCWSALVCMMVYVSAFSVGF. Topologically, residues 424 to 442 are cytoplasmic; the sequence is GPVTWLVLSEIYPAEIRGR. Tryptophan 428 contacts D-glucose. Residues 443–463 form a helical membrane-spanning segment; that stretch reads AFAFCSSFNWAANLFISLSFL. Residues 464–468 are Extracellular-facing; the sequence is DLIGA. A helical transmembrane segment spans residues 469–489; it reads IGLAWTFLLYGLTAVLGLAFI. The Cytoplasmic portion of the chain corresponds to 490–536; the sequence is YLLVPETKGQSLAEIEQQFQTSRFPLNFGHRQRIGIQYHRLDVSSAS.

Belongs to the major facilitator superfamily. Sugar transporter (TC 2.A.1.1) family. Glucose transporter subfamily.

It is found in the endomembrane system. The protein localises to the cytoplasm. Its subcellular location is the perinuclear region. The enzyme catalyses D-glucose(out) = D-glucose(in). In terms of biological role, facilitative glucose transporter required for the development of the cardiovascular system. This Mus musculus (Mouse) protein is Solute carrier family 2, facilitated glucose transporter member 10.